A 245-amino-acid polypeptide reads, in one-letter code: Uridylate kinase (245 aa).

20–23 (KVSG) contributes to the ATP binding site. Glycine 62 serves as a coordination point for UMP. ATP-binding residues include glycine 63 and arginine 67. Residues aspartate 81 and 142 to 149 (IGSPFFTT) each bind UMP. Residues threonine 169, glutamine 170, tyrosine 175, and aspartate 178 each contribute to the ATP site.

Belongs to the UMP kinase family. As to quaternary structure, homohexamer.

It is found in the cytoplasm. The enzyme catalyses UMP + ATP = UDP + ADP. Its pathway is pyrimidine metabolism; CTP biosynthesis via de novo pathway; UDP from UMP (UMPK route): step 1/1. With respect to regulation, inhibited by UTP. Functionally, catalyzes the reversible phosphorylation of UMP to UDP. This is Uridylate kinase from Anaplasma marginale (strain St. Maries).